The sequence spans 482 residues: MANQRMLGFVHTAQRMPDKRPAAERRQDFAEIYARFSDERANEQANRCSQCGVPFCQVHCPVSNNIPDWLKLTSEGRLEEAYEVSQATNNFPEICGRICPQDRLCEGNCVIEQSTHGAVTIGSVEKYINDTAWDQGWVKPRTPSRELGLSVGVIGAGPAGLAAAEELRAKGYEVHVYDRYDRMGGLLVYGIPGFKLEKSVVERRVKLLADAGVIYHPNFEVGRDASLPELRRKHVAVLVATGVYKARDIKAPGSGLGNIVAALDYLTTSNKVSLGDTVEAYENGSLNAAGKHVVVLGGGDTAMDCVRTAIRQGATSVKCLYRRDRKNMPGSQREVAHAEEEGVEFIWQAAPEGFTGDTVVTGVRAVRIHLGVADATGRQTPQVIEGSEFTVQADLVIKALGFEPEDLPNAFDEPELKVTRWGTLLVDHRTKMTNMDGVFAAGDIVRGASLVVWAIRDGRDAAEGIHAYAKAKAEAPVAVAAE.

The 34-residue stretch at 39–72 (ERANEQANRCSQCGVPFCQVHCPVSNNIPDWLKL) folds into the 4Fe-4S ferredoxin-type domain. 4 residues coordinate [4Fe-4S] cluster: Cys-95, Cys-99, Cys-105, and Cys-109.

As to quaternary structure, aggregate of 4 catalytic active heterodimers, consisting of a large and a small subunit. [4Fe-4S] cluster is required as a cofactor.

It catalyses the reaction 2 L-glutamate + NADP(+) = L-glutamine + 2-oxoglutarate + NADPH + H(+). It participates in amino-acid biosynthesis; L-glutamate biosynthesis via GLT pathway; L-glutamate from 2-oxoglutarate and L-glutamine (NADP(+) route): step 1/1. The protein operates within energy metabolism; nitrogen metabolism. This is Glutamate synthase [NADPH] small chain (gltD) from Azospirillum brasilense.